The chain runs to 181 residues: Peptidyl-prolyl cis-trans isomerase H (181 aa).

The region spanning 17-180 (FFDIALGGVP…QDVIITQCGE (164 aa)) is the PPIase cyclophilin-type domain.

The protein belongs to the cyclophilin-type PPIase family. PPIase H subfamily.

It localises to the nucleus. It catalyses the reaction [protein]-peptidylproline (omega=180) = [protein]-peptidylproline (omega=0). Functionally, PPIases accelerate the folding of proteins. It catalyzes the cis-trans isomerization of proline imidic peptide bonds in oligopeptides. In Aspergillus fumigatus (strain ATCC MYA-4609 / CBS 101355 / FGSC A1100 / Af293) (Neosartorya fumigata), this protein is Peptidyl-prolyl cis-trans isomerase H (cyp3).